A 343-amino-acid polypeptide reads, in one-letter code: Selenide, water dikinase (343 aa).

Sec-16 is a catalytic residue. Position 16 (Sec-16) is a non-standard amino acid, selenocysteine. Residues Lys-19 and 46–48 (GAE) each bind ATP. A Mg(2+)-binding site is contributed by Asp-49. Residues Asp-66, Asp-89, and 137-139 (GHT) contribute to the ATP site. Asp-89 is a Mg(2+) binding site. Asp-225 contributes to the Mg(2+) binding site.

It belongs to the selenophosphate synthase 1 family. Class I subfamily. As to quaternary structure, homodimer. The cofactor is Mg(2+).

It carries out the reaction hydrogenselenide + ATP + H2O = selenophosphate + AMP + phosphate + 2 H(+). Synthesizes selenophosphate from selenide and ATP. The polypeptide is Selenide, water dikinase (Geobacter sp. (strain M21)).